The chain runs to 673 residues: DNA ligase (673 aa).

Residues 32 to 36, 81 to 82, and E111 contribute to the NAD(+) site; these read DHVYD and SL. K113 functions as the N6-AMP-lysine intermediate in the catalytic mechanism. Residues R134, E171, K286, and K310 each coordinate NAD(+). Residues C404, C407, C422, and C428 each contribute to the Zn(2+) site. The 79-residue stretch at 595-673 folds into the BRCT domain; that stretch reads NIIDEYKNKT…NEFWKKDNNF (79 aa).

Belongs to the NAD-dependent DNA ligase family. LigA subfamily. Mg(2+) is required as a cofactor. The cofactor is Mn(2+).

It carries out the reaction NAD(+) + (deoxyribonucleotide)n-3'-hydroxyl + 5'-phospho-(deoxyribonucleotide)m = (deoxyribonucleotide)n+m + AMP + beta-nicotinamide D-nucleotide.. Its function is as follows. DNA ligase that catalyzes the formation of phosphodiester linkages between 5'-phosphoryl and 3'-hydroxyl groups in double-stranded DNA using NAD as a coenzyme and as the energy source for the reaction. It is essential for DNA replication and repair of damaged DNA. In Ureaplasma parvum serovar 3 (strain ATCC 27815 / 27 / NCTC 11736), this protein is DNA ligase.